The sequence spans 308 residues: GATA transcription factor 9 (308 aa).

The segment at 34-57 (DDGLNTLPDSSTLSTGTLTDSSNS) is disordered. Residues 39 to 57 (TLPDSSTLSTGTLTDSSNS) are compositionally biased toward low complexity. Positions 142–149 (KARSKRSR) match the Nuclear localization signal motif. Residues 193–247 (SGGGRRCLHCATEKTPQWRTGPMGPKTLCNACGVRYKSGRLVPEYRPASSPTFVM) form a GATA-type zinc finger.

The protein belongs to the type IV zinc-finger family. Class A subfamily.

It is found in the nucleus. Transcriptional activator that specifically binds 5'-GATA-3' or 5'-GAT-3' motifs within gene promoters. May be involved in the regulation of some light-responsive genes. This chain is GATA transcription factor 9 (GATA9), found in Arabidopsis thaliana (Mouse-ear cress).